The chain runs to 206 residues: Imidazole glycerol phosphate synthase subunit hisH (206 aa).

A Glutamine amidotransferase type-1 domain is found at 2 to 206; the sequence is KVGLVDYSMG…REVMKKAASL (205 aa). The active-site Nucleophile is C80. Active-site residues include H184 and E186.

As to quaternary structure, heterodimer of hisH and hisF.

It is found in the plastid. The protein resides in the chloroplast. It carries out the reaction 5-[(5-phospho-1-deoxy-D-ribulos-1-ylimino)methylamino]-1-(5-phospho-beta-D-ribosyl)imidazole-4-carboxamide + L-glutamine = D-erythro-1-(imidazol-4-yl)glycerol 3-phosphate + 5-amino-1-(5-phospho-beta-D-ribosyl)imidazole-4-carboxamide + L-glutamate + H(+). It catalyses the reaction L-glutamine + H2O = L-glutamate + NH4(+). Its pathway is amino-acid biosynthesis; L-histidine biosynthesis; L-histidine from 5-phospho-alpha-D-ribose 1-diphosphate: step 5/9. IGPS catalyzes the conversion of PRFAR and glutamine to IGP, AICAR and glutamate. The HisH subunit catalyzes the hydrolysis of glutamine to glutamate and ammonia as part of the synthesis of IGP and AICAR. The resulting ammonia molecule is channeled to the active site of HisF. The sequence is that of Imidazole glycerol phosphate synthase subunit hisH from Cyanidioschyzon merolae (strain NIES-3377 / 10D) (Unicellular red alga).